Consider the following 263-residue polypeptide: ATP synthase subunit delta (263 aa).

This sequence belongs to the ATPase delta chain family. F-type ATPases have 2 components, F(1) - the catalytic core - and F(0) - the membrane proton channel. F(1) has five subunits: alpha(3), beta(3), gamma(1), delta(1), epsilon(1). F(0) has three main subunits: a(1), b(2) and c(10-14). The alpha and beta chains form an alternating ring which encloses part of the gamma chain. F(1) is attached to F(0) by a central stalk formed by the gamma and epsilon chains, while a peripheral stalk is formed by the delta and b chains.

The protein localises to the cell membrane. In terms of biological role, f(1)F(0) ATP synthase produces ATP from ADP in the presence of a proton or sodium gradient. F-type ATPases consist of two structural domains, F(1) containing the extramembraneous catalytic core and F(0) containing the membrane proton channel, linked together by a central stalk and a peripheral stalk. During catalysis, ATP synthesis in the catalytic domain of F(1) is coupled via a rotary mechanism of the central stalk subunits to proton translocation. Its function is as follows. This protein is part of the stalk that links CF(0) to CF(1). It either transmits conformational changes from CF(0) to CF(1) or is implicated in proton conduction. The sequence is that of ATP synthase subunit delta from Leifsonia xyli subsp. xyli (strain CTCB07).